A 37-amino-acid polypeptide reads, in one-letter code: Large ribosomal subunit protein bL36c (37 aa).

Belongs to the bacterial ribosomal protein bL36 family.

Its subcellular location is the plastid. The protein localises to the chloroplast. The polypeptide is Large ribosomal subunit protein bL36c (Bigelowiella natans (Pedinomonas minutissima)).